Here is a 255-residue protein sequence, read N- to C-terminus: MSTDLHWQTQGQGPDLVLLHGWGMNGAVWQQVVERLEPHFRLHVVDLPGYGHSAHLHAASLEEIAQQLLEHAPKQAIWVGWSLGGLVATHMALHHADYVSKLVTVASSPKFAAEARWRGIQPQVLSAFTEQLSEDFHITVERFMALQAMGSPSARQDVKNLKQAVFSRPQPNPQSLLAGLQMLAEVDLRDHLPHLTMPMLRLYGRLDGLVPIKVAQDLEKALPASEQFIFTQSSHAPFITEPESFCHQLLSFAGK.

The AB hydrolase-1 domain occupies 16-242 (LVLLHGWGMN…SSHAPFITEP (227 aa)). Substrate-binding positions include Trp22, 82–83 (SL), and 143–147 (FMALQ). The active-site Nucleophile is Ser82. Residues Asp207 and His235 contribute to the active site. His235 lines the substrate pocket.

This sequence belongs to the AB hydrolase superfamily. Carboxylesterase BioH family. In terms of assembly, monomer.

It is found in the cytoplasm. It catalyses the reaction 6-carboxyhexanoyl-[ACP] methyl ester + H2O = 6-carboxyhexanoyl-[ACP] + methanol + H(+). It functions in the pathway cofactor biosynthesis; biotin biosynthesis. Its function is as follows. The physiological role of BioH is to remove the methyl group introduced by BioC when the pimeloyl moiety is complete. It allows to synthesize pimeloyl-ACP via the fatty acid synthetic pathway through the hydrolysis of the ester bonds of pimeloyl-ACP esters. This chain is Pimeloyl-[acyl-carrier protein] methyl ester esterase, found in Vibrio vulnificus (strain YJ016).